Consider the following 149-residue polypeptide: Nucleoside diphosphate kinase (149 aa).

ATP-binding residues include Lys-9, Phe-57, Arg-85, Thr-91, Arg-102, and Asn-112. His-115 acts as the Pros-phosphohistidine intermediate in catalysis.

This sequence belongs to the NDK family. Mg(2+) serves as cofactor.

It is found in the cytoplasm. The enzyme catalyses a 2'-deoxyribonucleoside 5'-diphosphate + ATP = a 2'-deoxyribonucleoside 5'-triphosphate + ADP. The catalysed reaction is a ribonucleoside 5'-diphosphate + ATP = a ribonucleoside 5'-triphosphate + ADP. In terms of biological role, major role in the synthesis of nucleoside triphosphates other than ATP. The ATP gamma phosphate is transferred to the NDP beta phosphate via a ping-pong mechanism, using a phosphorylated active-site intermediate. This chain is Nucleoside diphosphate kinase, found in Methanocorpusculum labreanum (strain ATCC 43576 / DSM 4855 / Z).